The sequence spans 372 residues: 3 beta-hydroxysteroid dehydrogenase/Delta 5--&gt;4-isomerase type 2 (372 aa).

The active-site Proton acceptor is Y154. K158 is an NAD(+) binding site. Residues L287 to I307 form a helical membrane-spanning segment.

Belongs to the 3-beta-HSD family. Expressed in adrenal gland, testis and ovary.

Its subcellular location is the endoplasmic reticulum membrane. It is found in the mitochondrion membrane. The catalysed reaction is a 3beta-hydroxy-Delta(5)-steroid + NAD(+) = a 3-oxo-Delta(5)-steroid + NADH + H(+). The enzyme catalyses a 3-oxo-Delta(5)-steroid = a 3-oxo-Delta(4)-steroid. It carries out the reaction pregnenolone + NAD(+) = pregn-5-ene-3,20-dione + NADH + H(+). It catalyses the reaction pregn-5-ene-3,20-dione = progesterone. The catalysed reaction is 3beta-hydroxyandrost-5-en-17-one + NAD(+) = androst-5-ene-3,17-dione + NADH + H(+). The enzyme catalyses androst-5-ene-3,17-dione = androst-4-ene-3,17-dione. Its pathway is lipid metabolism; steroid biosynthesis. Its function is as follows. 3-beta-HSD is a bifunctional enzyme, that catalyzes the oxidative conversion of Delta(5)-ene-3-beta-hydroxy steroid, and the oxidative conversion of ketosteroids. The 3-beta-HSD enzymatic system plays a crucial role in the biosynthesis of all classes of hormonal steroids. The sequence is that of 3 beta-hydroxysteroid dehydrogenase/Delta 5--&gt;4-isomerase type 2 from Homo sapiens (Human).